A 470-amino-acid chain; its full sequence is MALSSVSSCEPMEDEMSIMGSDTEDNFTGGDTCAEATRGLVNKSAFVPTQTVGTVSALRNVVGDPPKSVVVSFSASPQRAQPSNPKSERPAFGHGRRNRRRPFRRNNWKQQQRGWEKPEPENVPARQSAGSWPKRSSLPVHMRLGQRGGDSSSADSGHGGAGPSDRWRFKTRTQSVARVHRNRRRGNANHGSNTPGRSAGDRLNAAAASSIADVCRRVTSSRIGEMFHGARETLTTPVKNGGFRAENSSPWAPVLGFGSDQFNPEARRITWDTLVEHGVNLYKLFEVRSHAAEAARSLRDAVMRGENLLEALASADETLSWCKMIVTKNLPMRTRDPIISSSVALLDNLRLKLEPFMRCYLSSSGSPTLAELCDHQRLSDVACVPTFMFVMLARIARAVGSGAETVSRDALGPDGRVLADYVPGACLAGTLEAIDAHKRRCKADTCSLVSAYTLVPVYLHGKYFYCNQIF.

Disordered stretches follow at residues 1 to 31 and 62 to 204; these read MALSSVSSCEPMEDEMSIMGSDTEDNFTGGD and VGDP…DRLN. Polar residues predominate over residues 71–85; that stretch reads VSFSASPQRAQPSNP. Basic residues-rich tracts occupy residues 94 to 107 and 178 to 187; these read HGRRNRRRPFRRNN and RVHRNRRRGN. Zn(2+)-binding residues include cysteine 359, histidine 437, cysteine 441, and cysteine 446. The CHC2-type zinc finger occupies 359–446; sequence CYLSSSGSPT…HKRRCKADTC (88 aa).

This sequence belongs to the HHV-1 ICP27 protein family. As to quaternary structure, homodimer. Homodimerization is required for transactivation. Associates in a complex with RNA, and host export factors NXF1/TAP and ALYREF; these interactions allow nuclear export of viral transcripts. Interacts with three host shuttling SR proteins SRSF1, SRSF3 and SRSF7. Interacts with host SRPK1. Interacts with IE62; this interaction enhances IE62 transactivation.

The protein localises to the host cytoplasm. It localises to the host nucleus. Its function is as follows. Multifunctional regulator of the expression of viral genes that mediates nuclear export of viral intronless mRNAs. This immediate early (EI) protein promotes the nuclear export of viral intronless mRNAs by interacting with mRNAs and host NXF1/TAP. This is mRNA export factor ICP27 homolog from Equine herpesvirus 1 (strain Ab4p) (EHV-1).